The primary structure comprises 529 residues: MAMGNPELRTHFFRSSHEPGIPNSLRFPNGFLVTCGLPWLLLLFSVTIILFHPLRKKSDLPLINPGKGRIGILRGYRSRKTFTTELPRLVADGLSKASAFRIAAPDGVNIVLAPSYAHEIAEHPDLNPGPIAGDEFNSHINGFEVFAQLGTSDVISESVRTRLTRQLTKLTPLLTSETPLLLQSQWKDAPDWVEVSPHETALFILSRLSSLVFVGDDLGRNPDWIRILTSYNTEAFAAAEELNLWPQILRPLIARLKPSCRQLRRYIRDARALLVPVLEQRRHAQSQGDRREYNDAIEWLDETSRSTGQPYDPILSQMLLAIGSFHTSSDLLGQVLLDLCMRPDWKVLVRELRKEIISSLQGEGWDKIALNNLKLMDSVLKESQRLKPASTVTMGRYASREITLSDGTIIPKGSTVFIANVAMRDSNIYPDPDDFVPDRFTTRREKGDSSAYLVSASPEHLGFGLGRHACPGRFFAANELKIVLSHMLMKYDIKLPDNGAVAPSKSGIFLATNPDARICVRRRKEEIVI.

A helical transmembrane segment spans residues 31–51 (FLVTCGLPWLLLLFSVTIILF). Cysteine 470 is a heme binding site.

Belongs to the cytochrome P450 family. Heme serves as cofactor.

It is found in the membrane. It participates in secondary metabolite biosynthesis; terpenoid biosynthesis. Its function is as follows. Cytochrome P450 monooxygenase; part of the gene cluster B that mediates the biosynthesis of austinol and dehydroaustinol, two fungal meroterpenoids. The first step of the pathway is the synthesis of 3,5-dimethylorsellinic acid by the polyketide synthase ausA. 3,5-dimethylorsellinic acid is then prenylated by the polyprenyl transferase ausN. Further epoxidation by the FAD-dependent monooxygenase ausM and cyclization by the probable terpene cyclase ausL lead to the formation of protoaustinoid A. Protoaustinoid A is then oxidized to spiro-lactone preaustinoid A3 by the combined action of the FAD-binding monooxygenases ausB and ausC, and the dioxygenase ausE. Acid-catalyzed keto-rearrangement and ring contraction of the tetraketide portion of preaustinoid A3 by ausJ lead to the formation of preaustinoid A4. The aldo-keto reductase ausK, with the help of ausH, is involved in the next step by transforming preaustinoid A4 into isoaustinone which is in turn hydroxylated by the P450 monooxygenase ausI to form austinolide. Finally, the cytochrome P450 monooxygenase ausG modifies austinolide to austinol. Austinol can be further modified to dehydroaustinol which forms a diffusible complex with diorcinol that initiates conidiation. Due to genetic rearrangements of the clusters and the subsequent loss of some enzymes, the end products of the Emericella nidulans austinoid biosynthesis clusters are austinol and dehydroaustinol, even if additional enzymes, such as the O-acetyltransferase ausQ and the cytochrome P450 monooxygenase ausR are still functional. The protein is Cytochrome P450 monooxygenase ausG of Emericella nidulans (strain FGSC A4 / ATCC 38163 / CBS 112.46 / NRRL 194 / M139) (Aspergillus nidulans).